An 871-amino-acid chain; its full sequence is DNA mismatch repair protein MutS (871 aa).

618-625 (GPNMSGKS) provides a ligand contact to ATP.

The protein belongs to the DNA mismatch repair MutS family.

Its function is as follows. This protein is involved in the repair of mismatches in DNA. It is possible that it carries out the mismatch recognition step. This protein has a weak ATPase activity. The protein is DNA mismatch repair protein MutS of Christiangramia forsetii (strain DSM 17595 / CGMCC 1.15422 / KT0803) (Gramella forsetii).